The following is a 126-amino-acid chain: Large ribosomal subunit protein bL12 (126 aa).

This sequence belongs to the bacterial ribosomal protein bL12 family. Homodimer. Part of the ribosomal stalk of the 50S ribosomal subunit. Forms a multimeric L10(L12)X complex, where L10 forms an elongated spine to which 2 to 4 L12 dimers bind in a sequential fashion. Binds GTP-bound translation factors.

In terms of biological role, forms part of the ribosomal stalk which helps the ribosome interact with GTP-bound translation factors. Is thus essential for accurate translation. This chain is Large ribosomal subunit protein bL12, found in Citrifermentans bemidjiense (strain ATCC BAA-1014 / DSM 16622 / JCM 12645 / Bem) (Geobacter bemidjiensis).